The following is a 29-amino-acid chain: Ceratotoxin-B (29 aa).

Homomer of four to six subunits.

The protein resides in the secreted. Functionally, female-specific peptides with potent activity against Gram-positive and Gram-negative bacteria. They have as well hemolytic activity. The chain is Ceratotoxin-B (CTXB) from Ceratitis capitata (Mediterranean fruit fly).